The chain runs to 298 residues: Ketohexokinase (298 aa).

Residues Asp15, Gly41, Asn42, and Asn45 each contribute to the beta-D-fructose site. ATP is bound by residues Arg108, 226 to 229, and 255 to 258; these read AEEG and GAGD. Residue Asp258 participates in beta-D-fructose binding.

It belongs to the carbohydrate kinase PfkB family. Homodimer. In terms of tissue distribution, most abundant in liver, kidney, gut, spleen and pancreas. Low levels also found in adrenal, muscle, brain and eye.

The enzyme catalyses beta-D-fructose + ATP = beta-D-fructose 1-phosphate + ADP + H(+). Its pathway is carbohydrate metabolism; fructose metabolism. Its activity is regulated as follows. Requires potassium. Inhibition by ADP. Its function is as follows. Catalyzes the phosphorylation of the ketose sugar fructose to fructose-1-phosphate. This chain is Ketohexokinase, found in Homo sapiens (Human).